The primary structure comprises 60 residues: Lantibiotic Pep5 (60 aa).

A propeptide spanning residues 1-26 (MKNNKNLFDLEIKKETSQNTDELEPQ) is cleaved from the precursor. Residues 1-29 (MKNNKNLFDLEIKKETSQNTDELEPQTAG) are disordered. Thr27 is subject to 2-oxobutanoic acid. Residues 35-39 (SVKQC) constitute a cross-link (lanthionine (Ser-Cys)). Residues Thr42 and Thr46 each carry the 2,3-didehydrobutyrine modification. The segment at residues 50–53 (TVSC) is a cross-link (beta-methyllanthionine (Thr-Cys)). The lanthionine (Ser-Cys) cross-link spans 52-59 (SCKGKNGC).

Belongs to the type A lantibiotic family. Post-translationally, maturation of lantibiotics involves the enzymatic conversion of Thr, and Ser into dehydrated AA and the formation of thioether bonds with cysteine. This is followed by membrane translocation and cleavage of the modified precursor. In terms of processing, after proteolysis of the propeptide, the N-terminal 2,3-didehydrobutyrine hydrolyzes to 2-oxobutanoic acid, possibly spontaneously.

Functionally, lanthionine-containing peptide antibiotic (lantibiotic) active on Gram-positive bacteria. The bactericidal activity of lantibiotics is based on depolarization of energized bacterial cytoplasmic membranes, initiated by the formation of aqueous transmembrane pores. This Staphylococcus epidermidis protein is Lantibiotic Pep5 (pepA).